Here is a 1154-residue protein sequence, read N- to C-terminus: Chromosome partition protein Smc (1154 aa).

32-39 contributes to the ATP binding site; that stretch reads PNGCGKSN. Coiled coils occupy residues 170-215, 282-505, and 627-993; these read VAGL…ARQA, LREA…LNGE, and AARR…EARE.

Belongs to the SMC family. Homodimer.

The protein resides in the cytoplasm. Its function is as follows. Required for chromosome condensation and partitioning. The polypeptide is Chromosome partition protein Smc (Rhodopseudomonas palustris (strain ATCC BAA-98 / CGA009)).